A 237-amino-acid polypeptide reads, in one-letter code: Regulator of G-protein signaling 9-binding protein (237 aa).

The Cytoplasmic portion of the chain corresponds to 1 to 214 (MAKEECKALL…TGPCDLSKAK (214 aa)). Coiled coils occupy residues 29-58 (GSAD…RLRL) and 144-169 (VEDL…MKVN). Positions 153 to 202 (EILQVGEMIQDMEMKVNVPRWTVQARQAAGAELLSSASAGVSSVGGVSVE) are SNARE-like. A helical; Anchor for type IV membrane protein membrane pass occupies residues 215–234 (AATIFSAVLLAAVALAVCVA). The Extracellular portion of the chain corresponds to 235–237 (KLS).

This sequence belongs to the RGS7BP/RGS9BP family. In terms of assembly, specifically interacts with isoform RGS9-1 of RGS9. Component of the RGS9-1-Gbeta5 complex composed of RGS9-1, Gbeta5 (GNB5) and RGS9BP. Specifically expressed in the retina. Only present in photoreceptors (at protein level).

The protein resides in the membrane. Its function is as follows. Regulator of G protein-coupled receptor (GPCR) signaling in phototransduction. Participates in the recovery phase of visual transduction via its interaction with RGS9-1 isoform. Acts as a membrane-anchor that mediates the targeting of RGS9-1 to the photoreceptor outer segment, where phototransduction takes place. Enhances the ability of RGS9-1 to stimulate G protein GTPase activity, allowing the visual signal to be terminated on the physiologically time scale. It also controls the proteolytic stability of RGS9-1, probably by protecting it from degradation. The protein is Regulator of G-protein signaling 9-binding protein (RGS9BP) of Bos taurus (Bovine).